Consider the following 298-residue polypeptide: Osmoprotective compounds uptake permease protein GgtD (298 aa).

The next 7 membrane-spanning stretches (helical) occupy residues 26–46 (IHIA…GLFI), 97–117 (IAVP…YAFA), 126–146 (LLFI…LIPV), 158–178 (TFLG…IYLL), 207–227 (LIVP…FLWV), 231–251 (LLVA…TIQL), and 263–283 (YLLT…FFGL). An ABC transmembrane type-1 domain is found at 91–283 (FLNSLTIAVP…IVPLMVFFGL (193 aa)).

This sequence belongs to the binding-protein-dependent transport system permease family. The complex is composed of two ATP-binding proteins (GgtA), two transmembrane proteins (GgtC and GgtD) and a solute-binding protein (GgtB).

The protein resides in the cell membrane. In terms of biological role, part of the ABC transporter complex GgtABCD involved in the uptake of the osmoprotective compounds glucosylglycerol (GG), sucrose and trehalose. Responsible for the translocation of the substrate across the membrane. The chain is Osmoprotective compounds uptake permease protein GgtD from Synechocystis sp. (strain ATCC 27184 / PCC 6803 / Kazusa).